A 333-amino-acid chain; its full sequence is Glycerol-3-phosphate dehydrogenase [NAD(P)+] (333 aa).

NADPH is bound by residues Ser10, Trp11, His31, Arg32, and Lys105. Positions 105, 136, and 138 each coordinate sn-glycerol 3-phosphate. Ala140 contributes to the NADPH binding site. Sn-glycerol 3-phosphate is bound by residues Lys191, Asp244, Ser254, Arg255, and Asn256. The Proton acceptor role is filled by Lys191. Residue Arg255 participates in NADPH binding. NADPH contacts are provided by Ile279 and Glu281.

Belongs to the NAD-dependent glycerol-3-phosphate dehydrogenase family.

It is found in the cytoplasm. The enzyme catalyses sn-glycerol 3-phosphate + NAD(+) = dihydroxyacetone phosphate + NADH + H(+). It carries out the reaction sn-glycerol 3-phosphate + NADP(+) = dihydroxyacetone phosphate + NADPH + H(+). Its pathway is membrane lipid metabolism; glycerophospholipid metabolism. Catalyzes the reduction of the glycolytic intermediate dihydroxyacetone phosphate (DHAP) to sn-glycerol 3-phosphate (G3P), the key precursor for phospholipid synthesis. The chain is Glycerol-3-phosphate dehydrogenase [NAD(P)+] from Chlorobium chlorochromatii (strain CaD3).